The sequence spans 252 residues: U2 small nuclear ribonucleoprotein A' (252 aa).

LRR repeat units lie at residues 41 to 62, 63 to 84, and 87 to 108; these read PHDAIDFTDNDIQVLGNFPLSP, RIRTLLLARNRIAQIQSTLPNA, and NLKNLVLASNNIGELADLEVLG. An LRRCT domain is found at 121 to 159; the sequence is NPVTKKENYRYWVLWLCPQVRFLDYVKVKDAERQKAKEL.

It belongs to the U2 small nuclear ribonucleoprotein A family. As to quaternary structure, associated with the spliceosome.

The protein localises to the nucleus. Involved in pre-mRNA splicing. The chain is U2 small nuclear ribonucleoprotein A' (lea-1) from Neurospora crassa (strain ATCC 24698 / 74-OR23-1A / CBS 708.71 / DSM 1257 / FGSC 987).